We begin with the raw amino-acid sequence, 336 residues long: Ferrochelatase (336 aa).

The Fe cation site is built by His206 and Glu287.

This sequence belongs to the ferrochelatase family.

It localises to the cytoplasm. It carries out the reaction heme b + 2 H(+) = protoporphyrin IX + Fe(2+). It participates in porphyrin-containing compound metabolism; protoheme biosynthesis; protoheme from protoporphyrin-IX: step 1/1. Its function is as follows. Catalyzes the ferrous insertion into protoporphyrin IX. This chain is Ferrochelatase, found in Neisseria gonorrhoeae (strain ATCC 700825 / FA 1090).